A 155-amino-acid polypeptide reads, in one-letter code: Small ribosomal subunit protein uS7 (155 aa).

It belongs to the universal ribosomal protein uS7 family. In terms of assembly, part of the 30S ribosomal subunit. Contacts proteins S9 and S11.

Functionally, one of the primary rRNA binding proteins, it binds directly to 16S rRNA where it nucleates assembly of the head domain of the 30S subunit. Is located at the subunit interface close to the decoding center, probably blocks exit of the E-site tRNA. The polypeptide is Small ribosomal subunit protein uS7 (Thermotoga maritima (strain ATCC 43589 / DSM 3109 / JCM 10099 / NBRC 100826 / MSB8)).